A 946-amino-acid chain; its full sequence is Serine/arginine repetitive matrix protein 1 (946 aa).

At Met-1 the chain carries N-acetylmethionine. The segment at 1-151 (MDAGFFRGTS…ASLKKQDEDK (151 aa)) is necessary for DNA and RNA-binding. The interval 1-156 (MDAGFFRGTS…QDEDKDKRDK (156 aa)) is necessary for mRNA 3'-end cleavage and cytoplasmic accumulation. Residue Arg-7 is modified to Citrulline. The 100-residue stretch at 27–126 (QLKFAECLEK…AGIPSAFLEL (100 aa)) folds into the PWI domain. Lys-127 is covalently cross-linked (Glycyl lysine isopeptide (Lys-Gly) (interchain with G-Cter in SUMO2)). Lys-140 carries the post-translational modification N6-acetyllysine. Positions 142–170 (ASLKKQDEDKDKRDKEEKESSREKRERSR) are enriched in basic and acidic residues. The tract at residues 142-946 (ASLKKQDEDK…MRKAQVSPQS (805 aa)) is disordered. Positions 171 to 207 (SPRRRKSRSPSPRRRSSPVRRERKRSHSRSPRHRTKS) are enriched in basic residues. Over residues 214–234 (PEKKEKSPELPEPSVRMKDSS) the composition is skewed to basic and acidic residues. Phosphoserine is present on residues Ser-220 and Ser-227. A Glycyl lysine isopeptide (Lys-Gly) (interchain with G-Cter in SUMO1); alternate cross-link involves residue Lys-231. Residue Lys-231 forms a Glycyl lysine isopeptide (Lys-Gly) (interchain with G-Cter in SUMO2); alternate linkage. Phosphoserine occurs at positions 234 and 240. Thr-241 carries the post-translational modification Phosphothreonine. Residues 246–273 (KAPKPEPVPEPKEPSPEKNSKKEKEKTR) show a composition bias toward basic and acidic residues. Lys-249 is covalently cross-linked (Glycyl lysine isopeptide (Lys-Gly) (interchain with G-Cter in SUMO2)). Ser-260 is subject to Phosphoserine. Basic residues-rich tracts occupy residues 274–327 (PRSR…RTPP) and 334–349 (PRHR…RRRS). Positions 298–707 (RRHRSRSRSY…NKRHSPSPRP (410 aa)) are necessary for speckles and matrix localization. The span at 350-366 (SASLSGSSSSSSSSRSR) shows a compositional bias: low complexity. Phosphoserine occurs at positions 387, 389, 391, and 400. Thr-404 is modified (phosphothreonine). Ser-412 bears the Phosphoserine mark. A Phosphothreonine modification is found at Thr-414. A phosphoserine mark is found at Ser-418, Ser-427, Ser-429, and Ser-434. The span at 426–436 (VSVSPGRTSGK) shows a compositional bias: polar residues. Residue Lys-445 forms a Glycyl lysine isopeptide (Lys-Gly) (interchain with G-Cter in SUMO2) linkage. 2 positions are modified to phosphoserine: Ser-448 and Ser-450. Lys-457 is covalently cross-linked (Glycyl lysine isopeptide (Lys-Gly) (interchain with G-Cter in SUMO2)). Phosphoserine occurs at positions 461 and 463. Residue Lys-470 forms a Glycyl lysine isopeptide (Lys-Gly) (interchain with G-Cter in SUMO2) linkage. At Ser-476 the chain carries Phosphoserine. Residues 476–499 (SVQQRRQYRRQNQQSSSDSGSSST) are compositionally biased toward low complexity. Basic and acidic residues predominate over residues 501-516 (EDERPKRSHVKNGEVG). Phosphoserine occurs at positions 522, 524, 526, 528, 530, 561, 563, 572, and 574. Basic residues predominate over residues 555–572 (SSRRRRSPSPPPARRRRS). Pro residues predominate over residues 574 to 585 (SPAPPPPPPPPP). Residues 586-611 (PRRRRSPTPPPRRRTPSPPPRRRSPS) show a composition bias toward basic residues. A phosphothreonine mark is found at Thr-593 and Thr-600. Phosphoserine is present on Ser-602. A compositionally biased stretch (low complexity) spans 612-624 (PRRYSPPIQRRYS). Position 615 is a phosphotyrosine (Tyr-615). A phosphoserine mark is found at Ser-616, Ser-624, and Ser-626. Thr-633 carries the phosphothreonine modification. Phosphoserine occurs at positions 635, 645, 647, 655, and 657. Basic residues predominate over residues 640–655 (PKRRASPSPPPKRRVS). Residues 668–682 (TKRRSPSLSSKHRKG) are compositionally biased toward basic residues. The span at 704-718 (SPRPRAPQTSSPPPV) shows a compositional bias: pro residues. A phosphoserine mark is found at Ser-713, Ser-714, Ser-723, Ser-725, Ser-731, and Ser-733. Over residues 724–736 (ASPQGRQSPSPST) the composition is skewed to polar residues. Thr-736 carries the phosphothreonine modification. Residues Ser-779, Ser-781, Ser-789, Ser-793, Ser-795, Ser-797, Ser-810, Ser-814, Ser-816, and Ser-818 each carry the phosphoserine modification. A compositionally biased stretch (low complexity) spans 779–800 (SPSPQSVRRVSSSRSVSGSPEP). Residue Thr-819 is modified to Phosphothreonine. Residues Ser-822 and Ser-832 each carry the phosphoserine modification. Residues 833–842 (PTPSLSPARN) are compositionally biased toward polar residues. Thr-834 is modified (phosphothreonine). Ser-836, Ser-838, and Ser-843 each carry phosphoserine. The span at 850–875 (KKKKKKKDKKHKKDKKHKKHKKHKKE) shows a compositional bias: basic residues. Low complexity predominate over residues 878–907 (VTIATPATAAPAAVSAATTTSAQEEPAAAP). The residue at position 913 (Thr-913) is a Phosphothreonine. A Phosphoserine modification is found at Ser-915. Residues 924–934 (DLERHLREKAL) show a composition bias toward basic and acidic residues. A Phosphoserine modification is found at Ser-943.

It belongs to the splicing factor SR family. Identified in the spliceosome C complex. Found in a pre-mRNA splicing complex with SFRS4, SFRS5, SNRP70, SNRPA1, SRRM1 and SRRM2. Component of the minor spliceosome, which splices U12-type introns. Found in a pre-mRNA exonic splicing enhancer (ESE) complex with SNRP70, SNRPA1, SRRM1 and TRA2B/SFRS10. Found in a mRNA splicing-dependent exon junction complex (EJC) with DEK, PRPF8, NCBP1, RBM8A, RNPS1, SRRM1 and ALYREF/THOC4. Interacts with DDX39B, CPSF1, RBM8A, RNPS1, and ALYREF/THOC4. Seems to be a compound of RNA export complexes that are released from speckles in a ATP-dependent manner. Citrullinated by PADI4. Post-translationally, phosphorylated on multiple serine and threonine residues by DYRK3 during the G2-to-M transition, after the nuclear-envelope breakdown. Phosphorylation by DYRK3 promotes disassembly of nuclear speckles.

It is found in the nucleus matrix. The protein localises to the nucleus speckle. Its function is as follows. Part of pre- and post-splicing multiprotein mRNP complexes. As a component of the minor spliceosome, involved in the splicing of U12-type introns in pre-mRNAs. Involved in numerous pre-mRNA processing events. Promotes constitutive and exonic splicing enhancer (ESE)-dependent splicing activation by bridging together sequence-specific (SR family proteins, SFRS4, SFRS5 and TRA2B/SFRS10) and basal snRNP (SNRP70 and SNRPA1) factors of the spliceosome. Stimulates mRNA 3'-end cleavage independently of the formation of an exon junction complex. Binds both pre-mRNA and spliced mRNA 20-25 nt upstream of exon-exon junctions. Binds RNA and DNA with low sequence specificity and has similar preference for either double- or single-stranded nucleic acid substrates. In Mus musculus (Mouse), this protein is Serine/arginine repetitive matrix protein 1 (Srrm1).